Reading from the N-terminus, the 695-residue chain is GATA zinc finger domain-containing protein 16 (695 aa).

Disordered stretches follow at residues 82–111 (SPIL…SNNA), 134–304 (VVNS…QQDK), and 422–472 (NNQF…KMRY). Composition is skewed to low complexity over residues 87–111 (SQQQ…SNNA) and 140–149 (KTTTTNNKPP). A coiled-coil region spans residues 150-174 (KQSKRKEKERLEEEKQTVAQQQQYQ). Positions 155–165 (KEKERLEEEKQ) are enriched in basic and acidic residues. Residues 199 to 209 (VSTTPYGNSQF) show a composition bias toward polar residues. The span at 210–298 (NNNNNNNNNN…NSNSNNNNNN (89 aa)) shows a compositional bias: low complexity. Over residues 422 to 433 (NNQFSGDKQSAL) the composition is skewed to polar residues. The span at 434–446 (NNVKNSKGGNTNN) shows a compositional bias: low complexity. A GATA-type zinc finger spans residues 479-504 (CHTCGVTNTPEWRRGPNGAKTLCNAC). The tract at residues 523 to 646 (NSTGVNITEP…TTNSITTPTT (124 aa)) is disordered. 2 stretches are compositionally biased toward low complexity: residues 544 to 556 (DNNN…SDSN) and 564 to 646 (GSNN…TPTT).

The polypeptide is GATA zinc finger domain-containing protein 16 (gtaP) (Dictyostelium discoideum (Social amoeba)).